The primary structure comprises 303 residues: UDP-3-O-acyl-N-acetylglucosamine deacetylase (303 aa).

Positions 78, 237, and 241 each coordinate Zn(2+). The active-site Proton donor is the His264.

This sequence belongs to the LpxC family. It depends on Zn(2+) as a cofactor.

It catalyses the reaction a UDP-3-O-[(3R)-3-hydroxyacyl]-N-acetyl-alpha-D-glucosamine + H2O = a UDP-3-O-[(3R)-3-hydroxyacyl]-alpha-D-glucosamine + acetate. It functions in the pathway glycolipid biosynthesis; lipid IV(A) biosynthesis; lipid IV(A) from (3R)-3-hydroxytetradecanoyl-[acyl-carrier-protein] and UDP-N-acetyl-alpha-D-glucosamine: step 2/6. Its function is as follows. Catalyzes the hydrolysis of UDP-3-O-myristoyl-N-acetylglucosamine to form UDP-3-O-myristoylglucosamine and acetate, the committed step in lipid A biosynthesis. The polypeptide is UDP-3-O-acyl-N-acetylglucosamine deacetylase (Coxiella burnetii (strain CbuK_Q154) (Coxiella burnetii (strain Q154))).